A 209-amino-acid chain; its full sequence is Cilia- and flagella-associated protein 418 (209 aa).

Positions 1–76 are required for interaction with FAM161A; it reads MAKDLDELLD…LINEIFEEPD (76 aa). The interval 24 to 58 is disordered; sequence LDLGERPKGDGGGGSHSGDRNGAQEKETLRSTETF. Positions 40-58 are enriched in basic and acidic residues; the sequence is SGDRNGAQEKETLRSTETF.

As to quaternary structure, interacts (via N-terminus) with FAM161A (via central region); the interaction is direct. Expressed in multiple tissues, including the brain, kidney, lung, spleen, heart, trachea and testis. Expressed in the retina (at protein level).

Its subcellular location is the cytoplasm. It is found in the photoreceptor inner segment. In terms of biological role, may be involved in photoreceptor outer segment disk morphogenesis. The protein is Cilia- and flagella-associated protein 418 of Mus musculus (Mouse).